The following is a 248-amino-acid chain: 14-3-3-like protein G-BOX factor 14 lambda (248 aa).

Residues Ser-70, Ser-112, and Ser-193 each carry the phosphoserine; by CRPK1 modification. Thr-214 carries the phosphothreonine; by CRPK1 modification.

The protein belongs to the 14-3-3 family. In terms of assembly, interacts with SERK1 in the cell membrane. Component of the SERK1 signaling complex, composed of KAPP, CDC48A, GRF6 or GRF7, SERK1, SERK2, SERK3/BAK1 and BRI1. Interacts with TPK1. Interacts with ADF1. Binds to CRPK1 at the plasma membrane. Interacts with DREB1A and DREB1B in the nucleus when activated by CRPK1-mediated phosphorylation upon freezing. Interacts with CINV1. Binds to the N-terminal region of B1L. In terms of processing, transphosphorylated by SERK1. Phosphorylated by CRPK1 in response to cold.

It localises to the nucleus. The protein resides in the cell membrane. It is found in the cytoplasm. Its function is as follows. Is associated with a DNA binding complex that binds to the G box, a well-characterized cis-acting DNA regulatory element found in plant genes. Specific negative regulator of slow-vacuolar (SV) ion channel. Mediates F-actin dynamics possibly through inhibiting ADF1 phosphorylation. Negative regulator of freezing tolerance that modulates cold-responsive C-repeat-binding factors (CBF) DREB1A and DREB1B proteins stability by facilitating their ubiquitin-mediated degradation when activated by CRPK1-mediated phosphorylation in freezing conditions; this processus is counteracted by B1L. The protein is 14-3-3-like protein G-BOX factor 14 lambda of Arabidopsis thaliana (Mouse-ear cress).